The chain runs to 582 residues: Hydrogen peroxide stress regulator 1 (582 aa).

Disordered regions lie at residues 24–55 (SPFA…HNSS), 107–154 (YPSA…GISK), 347–366 (TSYN…SGET), and 375–422 (NTSG…GGKS). The span at 107–125 (YPSASFSTSQHPSQVYNDG) shows a compositional bias: polar residues. Residues 126–143 (STLNSNNTTQQLNNNNGF) are compositionally biased toward low complexity. Positions 375-392 (NTSGRSPNSMEATEQIGT) are enriched in polar residues. A C2H2-type 1 zinc finger spans residues 423 to 446 (FVCPECSKKFKRSEHLRRHIRSLH). The C2H2-type 2; atypical zinc finger occupies 452–473 (FVCICGKRFSRRDNLRQHERLH).

It localises to the nucleus. Functionally, transcription factor that globally supports gene expression in response to hydrogen peroxide. This chain is Hydrogen peroxide stress regulator 1 (hsr1), found in Schizosaccharomyces pombe (strain 972 / ATCC 24843) (Fission yeast).